The following is a 518-amino-acid chain: Gypsy retrotransposon integrase-like protein 1 (518 aa).

Residues 130 to 292 (QQHLPMVGNP…TPYFQMFNRN (163 aa)) form the Integrase catalytic domain. A Phosphoserine modification is found at Ser-498.

This Mus musculus (Mouse) protein is Gypsy retrotransposon integrase-like protein 1 (Gin1).